The following is a 311-amino-acid chain: MQNYKYDKAIVAESKNGGSPALNNNPRKGGSKRVLLICLDLFCLFMAGLPFIIIETSTIKPYHRGFYCNDESIKYPQKTGETINDAVLTAVGIVIAILAIITGEFYRIYYLKEKSRSTIQNPYVAALYKQVGCFLFGCAISQSFTDIAKVSIGRLRPHFLNVCNPDFSQINCSVGYIQNYRCRGEDSKVQEARKSFFSGHASFSMYTMLYLVLYLQARFTWRGARLLRPLLQFTLIMMAFYTGLSRVSDHKHHPSDVLAGFAQGALVACCIVFFVSDLFKTKTTLSLPPSAIRKDMLSPVDIDRSNHHNMV.

The Cytoplasmic segment spans residues 1-33 (MQNYKYDKAIVAESKNGGSPALNNNPRKGGSKR). Phosphoserine is present on serine 19. Residues 34 to 54 (VLLICLDLFCLFMAGLPFIII) traverse the membrane as a helical segment. Residues 55–85 (ETSTIKPYHRGFYCNDESIKYPQKTGETIND) are Extracellular-facing. Residues 86 to 106 (AVLTAVGIVIAILAIITGEFY) traverse the membrane as a helical segment. Topologically, residues 107–123 (RIYYLKEKSRSTIQNPY) are cytoplasmic. Residues 109-110 (YY) carry the Dityrosine basolateral targeting motif motif. The chain crosses the membrane as a helical span at residues 124–144 (VAALYKQVGCFLFGCAISQSF). The Extracellular segment spans residues 145 to 194 (TDIAKVSIGRLRPHFLNVCNPDFSQINCSVGYIQNYRCRGEDSKVQEARK). A phosphatase sequence motif I region spans residues 149–157 (KVSIGRLRP). N-linked (GlcNAc...) asparagine glycosylation occurs at asparagine 171. The Integrin-binding motif signature appears at 183–185 (RGE). The helical transmembrane segment at 195–215 (SFFSGHASFSMYTMLYLVLYL) threads the bilayer. A phosphatase sequence motif II region spans residues 197–200 (FSGH). Histidine 200 (proton donors) is an active-site residue. Over 216–226 (QARFTWRGARL) the chain is Cytoplasmic. Residues 227 to 244 (LRPLLQFTLIMMAFYTGL) traverse the membrane as a helical segment. A phosphatase sequence motif III region spans residues 245 to 256 (SRVSDHKHHPSD). Over 245–258 (SRVSDHKHHPSDVL) the chain is Extracellular. Histidine 252 serves as the catalytic Nucleophile. The helical transmembrane segment at 259–279 (AGFAQGALVACCIVFFVSDLF) threads the bilayer. The interval 276-311 (SDLFKTKTTLSLPPSAIRKDMLSPVDIDRSNHHNMV) is mediates interaction with CTNND1. The Cytoplasmic portion of the chain corresponds to 280-311 (KTKTTLSLPPSAIRKDMLSPVDIDRSNHHNMV).

The protein belongs to the PA-phosphatase related phosphoesterase family. In terms of assembly, forms functional homodimers and homooligomers that are not required for substrate recognition and catalytic activity. Can also form heterooligomers with other PLPP2 and PLPP3. Interacts with CTNND1; negatively regulates the PLPP3-mediated stabilization of beta-catenin/CTNNB1. Post-translationally, N-glycosylated. Contains high-mannose oligosaccharides.

The protein resides in the cell membrane. Its subcellular location is the basolateral cell membrane. It is found in the endoplasmic reticulum membrane. The protein localises to the endoplasmic reticulum-Golgi intermediate compartment membrane. It localises to the golgi apparatus membrane. The protein resides in the golgi apparatus. Its subcellular location is the trans-Golgi network membrane. It is found in the membrane raft. It catalyses the reaction a 1,2-diacyl-sn-glycero-3-phosphate + H2O = a 1,2-diacyl-sn-glycerol + phosphate. The enzyme catalyses 1,2-dihexadecanoyl-sn-glycero-3-phosphate + H2O = 1,2-dihexadecanoyl-sn-glycerol + phosphate. It carries out the reaction 1,2-di-(9Z-octadecenoyl)-sn-glycero-3-phosphate + H2O = 1,2-di-(9Z-octadecenoyl)-sn-glycerol + phosphate. The catalysed reaction is a monoacyl-sn-glycero-3-phosphate + H2O = a monoacylglycerol + phosphate. It catalyses the reaction (9Z)-octadecenoyl-sn-glycero-3-phosphate + H2O = (9Z-octadecenoyl)-glycerol + phosphate. The enzyme catalyses sphing-4-enine 1-phosphate + H2O = sphing-4-enine + phosphate. It carries out the reaction an N-acylsphing-4-enine 1-phosphate + H2O = an N-acylsphing-4-enine + phosphate. The catalysed reaction is N-(octanoyl)-sphing-4-enine-1-phosphate + H2O = N-octanoylsphing-4-enine + phosphate. It catalyses the reaction N-(9Z-octadecenoyl)-ethanolamine phosphate + H2O = N-(9Z-octadecenoyl) ethanolamine + phosphate. Its pathway is lipid metabolism; phospholipid metabolism. Magnesium-independent phospholipid phosphatase. Insensitive to N-ethylmaleimide. Inhibited by sphingosine, zinc ions and modestly by propanolol. Magnesium-independent phospholipid phosphatase of the plasma membrane that catalyzes the dephosphorylation of a variety of glycerolipid and sphingolipid phosphate esters including phosphatidate/PA, lysophosphatidate/LPA, diacylglycerol pyrophosphate/DGPP, sphingosine 1-phosphate/S1P and ceramide 1-phosphate/C1P. Also acts on N-oleoyl ethanolamine phosphate/N-(9Z-octadecenoyl)-ethanolamine phosphate, a potential physiological compound. Has both an extracellular and an intracellular phosphatase activity, allowing the hydrolysis and the cellular uptake of these bioactive lipid mediators from the milieu, regulating signal transduction in different cellular processes. Through the dephosphorylation of extracellular sphingosine-1-phosphate and the regulation of its extra- and intracellular availability, plays a role in vascular homeostasis, regulating endothelial cell migration, adhesion, survival, proliferation and the production of pro-inflammatory cytokines. By maintaining the appropriate levels of this lipid in the cerebellum, also ensure its proper development and function. Through its intracellular lipid phosphatase activity may act in early compartments of the secretory pathway, regulating the formation of Golgi to endoplasmic reticulum retrograde transport carriers. Its function is as follows. Independently of this phosphatase activity may also function in the Wnt signaling pathway and the stabilization of beta-catenin/CTNNB1, thereby regulating cell proliferation, migration and differentiation in angiogenesis or yet in tumor growth. Also plays a role in integrin-mediated cell-cell adhesion in angiogenesis. This Bos taurus (Bovine) protein is Phospholipid phosphatase 3.